A 362-amino-acid chain; its full sequence is Phosphoserine aminotransferase (362 aa).

2 residues coordinate L-glutamate: S9 and R42. Pyridoxal 5'-phosphate contacts are provided by residues 76 to 77 (GR), W102, T153, D174, and Q197. N6-(pyridoxal phosphate)lysine is present on K198. Pyridoxal 5'-phosphate is bound at residue 239–240 (NT).

The protein belongs to the class-V pyridoxal-phosphate-dependent aminotransferase family. SerC subfamily. Homodimer. Pyridoxal 5'-phosphate serves as cofactor.

The protein localises to the cytoplasm. The catalysed reaction is O-phospho-L-serine + 2-oxoglutarate = 3-phosphooxypyruvate + L-glutamate. It carries out the reaction 4-(phosphooxy)-L-threonine + 2-oxoglutarate = (R)-3-hydroxy-2-oxo-4-phosphooxybutanoate + L-glutamate. It functions in the pathway amino-acid biosynthesis; L-serine biosynthesis; L-serine from 3-phospho-D-glycerate: step 2/3. It participates in cofactor biosynthesis; pyridoxine 5'-phosphate biosynthesis; pyridoxine 5'-phosphate from D-erythrose 4-phosphate: step 3/5. Catalyzes the reversible conversion of 3-phosphohydroxypyruvate to phosphoserine and of 3-hydroxy-2-oxo-4-phosphonooxybutanoate to phosphohydroxythreonine. The chain is Phosphoserine aminotransferase from Escherichia coli O7:K1 (strain IAI39 / ExPEC).